The primary structure comprises 211 residues: tRNA (guanine-N(7)-)-methyltransferase (211 aa).

4 residues coordinate S-adenosyl-L-methionine: glutamate 37, aspartate 62, glutamate 89, and aspartate 112. Aspartate 112 is a catalytic residue. Substrate-binding residues include lysine 116 and aspartate 148.

This sequence belongs to the class I-like SAM-binding methyltransferase superfamily. TrmB family.

The catalysed reaction is guanosine(46) in tRNA + S-adenosyl-L-methionine = N(7)-methylguanosine(46) in tRNA + S-adenosyl-L-homocysteine. Its pathway is tRNA modification; N(7)-methylguanine-tRNA biosynthesis. Its function is as follows. Catalyzes the formation of N(7)-methylguanine at position 46 (m7G46) in tRNA. The protein is tRNA (guanine-N(7)-)-methyltransferase of Geobacter metallireducens (strain ATCC 53774 / DSM 7210 / GS-15).